We begin with the raw amino-acid sequence, 400 residues long: Homoserine O-acetyltransferase (400 aa).

The region spanning 64–373 is the AB hydrolase-1 domain; it reads NAILICHALT…TDRGHDAFLL (310 aa). Ser-169 serves as the catalytic Nucleophile. Residue Arg-239 coordinates substrate. Residues Asp-335 and His-368 contribute to the active site. Asp-369 lines the substrate pocket.

Belongs to the AB hydrolase superfamily. MetX family. In terms of assembly, homodimer.

The protein localises to the cytoplasm. The catalysed reaction is L-homoserine + acetyl-CoA = O-acetyl-L-homoserine + CoA. It participates in amino-acid biosynthesis; L-methionine biosynthesis via de novo pathway; O-acetyl-L-homoserine from L-homoserine: step 1/1. In terms of biological role, transfers an acetyl group from acetyl-CoA to L-homoserine, forming acetyl-L-homoserine. This chain is Homoserine O-acetyltransferase, found in Bradyrhizobium diazoefficiens (strain JCM 10833 / BCRC 13528 / IAM 13628 / NBRC 14792 / USDA 110).